The following is a 264-amino-acid chain: Thymidylate synthase (264 aa).

Arg-21 is a binding site for dUMP. His-51 contacts (6R)-5,10-methylene-5,6,7,8-tetrahydrofolate. 126–127 is a binding site for dUMP; sequence RR. The active-site Nucleophile is Cys-146. Residues 166-169, Asn-177, and 207-209 each bind dUMP; these read RSCD and HLY. Asp-169 lines the (6R)-5,10-methylene-5,6,7,8-tetrahydrofolate pocket. Ser-263 contacts (6R)-5,10-methylene-5,6,7,8-tetrahydrofolate.

This sequence belongs to the thymidylate synthase family. Bacterial-type ThyA subfamily. As to quaternary structure, homodimer.

The protein resides in the cytoplasm. The enzyme catalyses dUMP + (6R)-5,10-methylene-5,6,7,8-tetrahydrofolate = 7,8-dihydrofolate + dTMP. The protein operates within pyrimidine metabolism; dTTP biosynthesis. In terms of biological role, catalyzes the reductive methylation of 2'-deoxyuridine-5'-monophosphate (dUMP) to 2'-deoxythymidine-5'-monophosphate (dTMP) while utilizing 5,10-methylenetetrahydrofolate (mTHF) as the methyl donor and reductant in the reaction, yielding dihydrofolate (DHF) as a by-product. This enzymatic reaction provides an intracellular de novo source of dTMP, an essential precursor for DNA biosynthesis. The chain is Thymidylate synthase from Buchnera aphidicola subsp. Schizaphis graminum (strain Sg).